Here is a 524-residue protein sequence, read N- to C-terminus: Cytochrome P450 monooxygenase patH (524 aa).

Topologically, residues Met-1–Met-4 are cytoplasmic. A helical membrane pass occupies residues Leu-5 to Val-23. Over Tyr-24–Gly-524 the chain is Lumenal. The N-linked (GlcNAc...) asparagine glycan is linked to Asn-191. Residue Cys-442 participates in heme binding. The N-linked (GlcNAc...) asparagine glycan is linked to Asn-499.

This sequence belongs to the cytochrome P450 family. Heme serves as cofactor.

Its subcellular location is the endoplasmic reticulum membrane. It catalyses the reaction 3-methylphenol + reduced [NADPH--hemoprotein reductase] + O2 = 3-hydroxybenzyl alcohol + oxidized [NADPH--hemoprotein reductase] + H2O + H(+). It participates in mycotoxin biosynthesis; patulin biosynthesis. In terms of biological role, cytochrome P450 monooxygenase; part of the gene cluster that mediates the biosynthesis of patulin, an acetate-derived tetraketide mycotoxin produced by several fungal species that shows antimicrobial properties against several bacteria. PatH catalyzes the conversion of m-cresol into m-hydroxybenzyl alcohol. The pathway begins with the synthesis of 6-methylsalicylic acid by the polyketide synthase (PKS) patK via condensation of acetate and malonate units. The 6-methylsalicylic acid decarboxylase patG then catalyzes the decarboxylation of 6-methylsalicylic acid to yield m-cresol (also known as 3-methylphenol). These first reactions occur in the cytosol. The intermediate m-cresol is then transported into the endoplasmic reticulum where the cytochrome P450 monooxygenase patH converts it to m-hydroxybenzyl alcohol, which is further converted to gentisyl alcohol by the cytochrome P450 monooxygenase patI. The oxidoreductases patJ and patO further convert gentisyl alcohol to isoepoxydon in the vacuole. PatN catalyzes then the transformation of isoepoxydon into phyllostine. The cluster protein patF is responsible for the conversion from phyllostine to neopatulin whereas the alcohol dehydrogenase patD converts neopatulin to E-ascladiol. The steps between isoepoxydon and E-ascladiol occur in the cytosol, and E-ascladiol is probably secreted to the extracellular space by one of the cluster-specific transporters patC or patM. Finally, the secreted patulin synthase patE catalyzes the conversion of E-ascladiol to patulin. This chain is Cytochrome P450 monooxygenase patH, found in Aspergillus clavatus (strain ATCC 1007 / CBS 513.65 / DSM 816 / NCTC 3887 / NRRL 1 / QM 1276 / 107).